A 95-amino-acid chain; its full sequence is Gas vesicle protein S (95 aa).

It belongs to the gas vesicle GvpA family.

Its subcellular location is the gas vesicle. In terms of biological role, probably a minor component of the gas vesicle. It is not clear what function gas vesicles perform in soil bacteria. When a minimal gvp locus (gvpA2-gvpR-gvpN-gvpF-gvpG-gvpL-gvpS-gvpK-gvpJ-gvpT-gvpU, called pNL29) is expressed in E.coli gas vesicles are made. The protein is Gas vesicle protein S of Priestia megaterium (Bacillus megaterium).